The sequence spans 233 residues: Synaptogyrin-1 (233 aa).

N-acetylmethionine is present on methionine 1. The Cytoplasmic portion of the chain corresponds to 1 to 23 (MEGGAYGAGKAGGAFDPYTLVRQ). The MARVEL domain occupies 20 to 173 (LVRQPHTILR…QAVLAFQRYQ (154 aa)). A helical transmembrane segment spans residues 24 to 44 (PHTILRVVSWLFSIVVFGSIV). Residues 45 to 71 (NEGYLNSASEGEEFCIYNRNPNACSYG) are Lumenal-facing. Residues 72–92 (VAVGVLAFLTCLLYLALDVYF) traverse the membrane as a helical segment. The Cytoplasmic segment spans residues 93–103 (PQISSVKDRKK). A helical membrane pass occupies residues 104–124 (AVLSDIGVSAFWAFLWFVGFC). The Lumenal portion of the chain corresponds to 125-148 (YLANQWQVSKPKDNPLNEGTDAAR). Residues 149–169 (AAIAFSFFSIFTWAGQAVLAF) traverse the membrane as a helical segment. The Cytoplasmic portion of the chain corresponds to 170–233 (QRYQIGADSA…EPQGYQSQGY (64 aa)). The segment at 194 to 233 (MPYAPYVEPTGPDPAGMGGTYQQPANTFDTEPQGYQSQGY) is disordered. Polar residues predominate over residues 213 to 233 (TYQQPANTFDTEPQGYQSQGY).

It belongs to the synaptogyrin family.

It localises to the cytoplasmic vesicle. The protein localises to the secretory vesicle. It is found in the synaptic vesicle membrane. The protein resides in the melanosome. May play a role in regulated exocytosis. Modulates the localization of synaptophysin/SYP into synaptic-like microvesicles and may therefore play a role in synaptic-like microvesicle formation and/or maturation. Involved in the regulation of short-term and long-term synaptic plasticity. This Homo sapiens (Human) protein is Synaptogyrin-1.